Reading from the N-terminus, the 33-residue chain is Photosystem II reaction center protein T (33 aa).

The chain crosses the membrane as a helical span at residues 3–23 (ALVYTFLLVSTLGIIFFAIFF).

This sequence belongs to the PsbT family. PSII is composed of 1 copy each of membrane proteins PsbA, PsbB, PsbC, PsbD, PsbE, PsbF, PsbH, PsbI, PsbJ, PsbK, PsbL, PsbM, PsbT, PsbY, PsbZ, Psb30/Ycf12, at least 3 peripheral proteins of the oxygen-evolving complex and a large number of cofactors. It forms dimeric complexes.

It localises to the plastid. The protein resides in the chloroplast thylakoid membrane. Functionally, found at the monomer-monomer interface of the photosystem II (PS II) dimer, plays a role in assembly and dimerization of PSII. PSII is a light-driven water plastoquinone oxidoreductase, using light energy to abstract electrons from H(2)O, generating a proton gradient subsequently used for ATP formation. The protein is Photosystem II reaction center protein T of Arabidopsis thaliana (Mouse-ear cress).